The following is a 324-amino-acid chain: Phospho-N-acetylmuramoyl-pentapeptide-transferase (324 aa).

9 helical membrane passes run valine 5–isoleucine 25, threonine 51–isoleucine 71, isoleucine 77–leucine 97, leucine 117–alanine 137, valine 147–serine 167, leucine 176–tryptophan 196, valine 203–histidine 223, valine 227–threonine 248, and valine 302–valine 322.

Belongs to the glycosyltransferase 4 family. MraY subfamily. The cofactor is Mg(2+).

The protein resides in the cell membrane. It catalyses the reaction UDP-N-acetyl-alpha-D-muramoyl-L-alanyl-gamma-D-glutamyl-meso-2,6-diaminopimeloyl-D-alanyl-D-alanine + di-trans,octa-cis-undecaprenyl phosphate = di-trans,octa-cis-undecaprenyl diphospho-N-acetyl-alpha-D-muramoyl-L-alanyl-D-glutamyl-meso-2,6-diaminopimeloyl-D-alanyl-D-alanine + UMP. Its pathway is cell wall biogenesis; peptidoglycan biosynthesis. In terms of biological role, catalyzes the initial step of the lipid cycle reactions in the biosynthesis of the cell wall peptidoglycan: transfers peptidoglycan precursor phospho-MurNAc-pentapeptide from UDP-MurNAc-pentapeptide onto the lipid carrier undecaprenyl phosphate, yielding undecaprenyl-pyrophosphoryl-MurNAc-pentapeptide, known as lipid I. This is Phospho-N-acetylmuramoyl-pentapeptide-transferase from Bacillus pumilus (strain SAFR-032).